We begin with the raw amino-acid sequence, 328 residues long: Cytochrome c biogenesis protein CcsA (328 aa).

The next 8 membrane-spanning stretches (helical) occupy residues 15–35 (FLVL…PSVP), 37–57 (LQAL…ALLG), 68–88 (ISNL…AHLI), 97–117 (LVGV…ALTL), 142–162 (VMML…AFLF), 236–256 (IIGL…VWAN), 271–291 (WALI…TKGW), and 297–317 (AILA…VNLL).

It belongs to the CcmF/CycK/Ccl1/NrfE/CcsA family. As to quaternary structure, may interact with ccs1.

It localises to the cellular thylakoid membrane. In terms of biological role, required during biogenesis of c-type cytochromes (cytochrome c6 and cytochrome f) at the step of heme attachment. The chain is Cytochrome c biogenesis protein CcsA from Gloeothece citriformis (strain PCC 7424) (Cyanothece sp. (strain PCC 7424)).